A 513-amino-acid polypeptide reads, in one-letter code: Probable E3 ubiquitin-protein ligase XBOS34 (513 aa).

ANK repeat units lie at residues 39–69 (EGKT…NVNA), 75–104 (YCGT…NPFI), and 108–137 (DCHT…LFCG). Polar residues-rich tracts occupy residues 309-327 (ITTT…NSLN) and 335-355 (SAPS…STYN). Disordered regions lie at residues 309 to 378 (ITTT…QNST) and 423 to 455 (SADG…SNSG). Residues 361 to 378 (GTSSGQSSSKHNKSQNST) show a composition bias toward low complexity. A compositionally biased stretch (basic and acidic residues) spans 436 to 446 (AENEGDAKPAE). An RING-type zinc finger spans residues 462–501 (CVICLDAPVEGACIPCGHMAGCMSCLKDIESKKWGCPICR).

The catalysed reaction is S-ubiquitinyl-[E2 ubiquitin-conjugating enzyme]-L-cysteine + [acceptor protein]-L-lysine = [E2 ubiquitin-conjugating enzyme]-L-cysteine + N(6)-ubiquitinyl-[acceptor protein]-L-lysine.. It functions in the pathway protein modification; protein ubiquitination. This is Probable E3 ubiquitin-protein ligase XBOS34 (XBOS34) from Oryza sativa subsp. japonica (Rice).